We begin with the raw amino-acid sequence, 31 residues long: Kalata-B9 (31 aa).

Residues G1–D31 constitute a cross-link (cyclopeptide (Gly-Asp)). Intrachain disulfides connect C6-C20, C10-C22, and C15-C28.

Belongs to the cyclotide family. Bracelet subfamily. In terms of processing, this peptide occurs in both cyclic and linear forms.

Probably participates in a plant defense mechanism. The sequence is that of Kalata-B9 from Oldenlandia affinis.